Consider the following 332-residue polypeptide: Ornithine carbamoyltransferase, catabolic (332 aa).

Carbamoyl phosphate is bound by residues 60 to 63, Q87, R111, and 138 to 141; these read STRT and HPTQ. L-ornithine is bound by residues N170, D230, and 234–235; that span reads SM. Residues 271–272 and R316 each bind carbamoyl phosphate; that span reads CL.

Belongs to the aspartate/ornithine carbamoyltransferase superfamily. OTCase family.

Its subcellular location is the cytoplasm. The catalysed reaction is carbamoyl phosphate + L-ornithine = L-citrulline + phosphate + H(+). It participates in amino-acid degradation; L-arginine degradation via ADI pathway; carbamoyl phosphate from L-arginine: step 2/2. Its function is as follows. Reversibly catalyzes the transfer of the carbamoyl group from carbamoyl phosphate (CP) to the N(epsilon) atom of ornithine (ORN) to produce L-citrulline. In Bacillus cereus (strain ATCC 10987 / NRS 248), this protein is Ornithine carbamoyltransferase, catabolic.